Here is a 959-residue protein sequence, read N- to C-terminus: Protein NLP7 (959 aa).

The disordered stretch occupies residues 1–22; it reads MCEPDDNSARNGVTTQPSRSRE. Residues 9-18 show a composition bias toward polar residues; it reads ARNGVTTQPS. Residues 578 to 659 form the RWP-RK domain; sequence KKKTEKKRGK…IESVQGTDGG (82 aa). Positions 633–654 form a coiled coil; the sequence is SRKIKKVNRSITKLKRVIESVQ. Composition is skewed to polar residues over residues 673 to 687, 694 to 703, and 735 to 745; these read THGQTSAQPLNSPNG, PNTNNSPNHW, and GTPTSHGSCDG. Residues 673-760 form a disordered region; that stretch reads THGQTSAQPL…PKVPNQDPLF (88 aa). In terms of domain architecture, PB1 spans 863–945; that stretch reads TVTIKASYKD…KIVRLLVHDV (83 aa).

As to quaternary structure, interacts with NRG2. In terms of tissue distribution, expressed in roots, stems, leaves, flowers and siliques. Detected in root hairs, emerging secondary roots, vascular tissues, leaf parenchyma cells and stomata.

The protein localises to the nucleus. Functionally, transcription factor involved in regulation of nitrate assimilation and in transduction of the nitrate signal. This Arabidopsis thaliana (Mouse-ear cress) protein is Protein NLP7 (NLP7).